A 43-amino-acid chain; its full sequence is Protein PsbN (43 aa).

A helical membrane pass occupies residues 5 to 27; sequence TLVTIFISGSLVSFTGYALYTAF.

It belongs to the PsbN family.

Its subcellular location is the plastid. The protein localises to the chloroplast thylakoid membrane. Functionally, may play a role in photosystem I and II biogenesis. This is Protein PsbN from Piper cenocladum (Ant piper).